The sequence spans 145 residues: D-aminoacyl-tRNA deacylase (145 aa).

Positions 137–138 match the Gly-cisPro motif, important for rejection of L-amino acids motif; that stretch reads GP.

Belongs to the DTD family. Homodimer.

The protein localises to the cytoplasm. It catalyses the reaction glycyl-tRNA(Ala) + H2O = tRNA(Ala) + glycine + H(+). The enzyme catalyses a D-aminoacyl-tRNA + H2O = a tRNA + a D-alpha-amino acid + H(+). Functionally, an aminoacyl-tRNA editing enzyme that deacylates mischarged D-aminoacyl-tRNAs. Also deacylates mischarged glycyl-tRNA(Ala), protecting cells against glycine mischarging by AlaRS. Acts via tRNA-based rather than protein-based catalysis; rejects L-amino acids rather than detecting D-amino acids in the active site. By recycling D-aminoacyl-tRNA to D-amino acids and free tRNA molecules, this enzyme counteracts the toxicity associated with the formation of D-aminoacyl-tRNA entities in vivo and helps enforce protein L-homochirality. The protein is D-aminoacyl-tRNA deacylase of Salmonella enteritidis PT4 (strain P125109).